Consider the following 60-residue polypeptide: Sperm protamine P1 (60 aa).

The tract at residues 1–60 (MARYRHSRSRSRSRYRRRRRRRSRYRSRRRRXRRRRRSRRGRRRRGYSRRRYSRRRRRRY) is disordered.

Belongs to the protamine P1 family. As to expression, testis.

The protein localises to the nucleus. It localises to the chromosome. Functionally, protamines substitute for histones in the chromatin of sperm during the haploid phase of spermatogenesis. They compact sperm DNA into a highly condensed, stable and inactive complex. The polypeptide is Sperm protamine P1 (PRM1) (Petrogale concinna (Nabarlek)).